Here is a 252-residue protein sequence, read N- to C-terminus: Chitooligosaccharide deacetylase (252 aa).

Histidine 61 and histidine 125 together coordinate Mg(2+).

This sequence belongs to the YdjC deacetylase family. ChbG subfamily. As to quaternary structure, homodimer. It depends on Mg(2+) as a cofactor.

Its subcellular location is the cytoplasm. The enzyme catalyses N,N'-diacetylchitobiose + H2O = N-acetyl-beta-D-glucosaminyl-(1-&gt;4)-D-glucosamine + acetate. The catalysed reaction is diacetylchitobiose-6'-phosphate + H2O = N'-monoacetylchitobiose-6'-phosphate + acetate. The protein operates within glycan degradation; chitin degradation. Involved in the degradation of chitin. ChbG is essential for growth on the acetylated chitooligosaccharides chitobiose and chitotriose but is dispensable for growth on cellobiose and chitosan dimer, the deacetylated form of chitobiose. Deacetylation of chitobiose-6-P and chitotriose-6-P is necessary for both the activation of the chb promoter by the regulatory protein ChbR and the hydrolysis of phosphorylated beta-glucosides by the phospho-beta-glucosidase ChbF. Catalyzes the removal of only one acetyl group from chitobiose-6-P to yield monoacetylchitobiose-6-P, the inducer of ChbR and the substrate of ChbF. The chain is Chitooligosaccharide deacetylase from Escherichia coli (strain 55989 / EAEC).